The primary structure comprises 189 residues: GTPase NRas (189 aa).

10–17 provides a ligand contact to GTP; that stretch reads GAGGVGKS. The Effector region motif lies at 32–40; sequence YDPTIEDSY. Residues 57–61 and 116–119 contribute to the GTP site; these read DTAGQ and NKCD. The segment at 166–185 is hypervariable region; that stretch reads YRMKKLNSNEDGNQGCMGLS. Cys181 is lipidated: S-palmitoyl cysteine. Residue Cys186 is the site of S-farnesyl cysteine attachment. The propeptide at 187-189 is removed in mature form; sequence IVM.

This sequence belongs to the small GTPase superfamily. Ras family. Palmitoylated by the ZDHHC9-GOLGA7 complex. Depalmitoylated by ABHD17A, ABHD17B and ABHD17C. A continuous cycle of de- and re-palmitoylation regulates rapid exchange between plasma membrane and Golgi.

It is found in the cell membrane. The protein resides in the golgi apparatus membrane. It carries out the reaction GTP + H2O = GDP + phosphate + H(+). Its activity is regulated as follows. Alternates between an inactive form bound to GDP and an active form bound to GTP. Activated by a guanine nucleotide-exchange factor (GEF) and inactivated by a GTPase-activating protein (GAP). Functionally, ras proteins bind GDP/GTP and possess intrinsic GTPase activity. This is GTPase NRas (NRAS) from Gallus gallus (Chicken).